A 639-amino-acid chain; its full sequence is Eukaryotic translation initiation factor 2-alpha kinase 2 (639 aa).

Residues 171-588 (FEEYSLLGRG…LEVLNCGLLL (418 aa)) enclose the Protein kinase domain. Residues 177–185 (LGRGGFGSV) and K200 each bind ATP. The span at 298-320 (ISTSRKSSYSSTTESSNFENLES) shows a compositional bias: low complexity. Positions 298 to 322 (ISTSRKSSYSSTTESSNFENLESPR) are disordered. Residue D417 is the Proton acceptor of the active site.

It belongs to the protein kinase superfamily. Ser/Thr protein kinase family. GCN2 subfamily. In terms of processing, autophosphorylated.

The enzyme catalyses L-seryl-[protein] + ATP = O-phospho-L-seryl-[protein] + ADP + H(+). It catalyses the reaction L-threonyl-[protein] + ATP = O-phospho-L-threonyl-[protein] + ADP + H(+). Mediates down-regulation of protein synthesis in response to stress conditions by the phosphorylation of the alpha subunit of eIF-2 (tif211) on 'Ser-52'. Protein synthesis is inhibited at the level of initiation. Activity is inhibited in the presence of heme. The polypeptide is Eukaryotic translation initiation factor 2-alpha kinase 2 (hri2) (Schizosaccharomyces pombe (strain 972 / ATCC 24843) (Fission yeast)).